The sequence spans 485 residues: Glutamate--tRNA ligase (485 aa).

Residues 11 to 21 (PSPTGHLHIGN) carry the 'HIGH' region motif. Residues 252 to 256 (KLSKR) carry the 'KMSKS' region motif. ATP is bound at residue K255.

This sequence belongs to the class-I aminoacyl-tRNA synthetase family. Glutamate--tRNA ligase type 1 subfamily. Monomer.

It localises to the cytoplasm. It carries out the reaction tRNA(Glu) + L-glutamate + ATP = L-glutamyl-tRNA(Glu) + AMP + diphosphate. In terms of biological role, catalyzes the attachment of glutamate to tRNA(Glu) in a two-step reaction: glutamate is first activated by ATP to form Glu-AMP and then transferred to the acceptor end of tRNA(Glu). This is Glutamate--tRNA ligase from Bacillus thuringiensis (strain Al Hakam).